The primary structure comprises 227 residues: Urease accessory protein UreG (227 aa).

Residues 1–10 (MHLDHAHTHD) are compositionally biased toward basic and acidic residues. The tract at residues 1–22 (MHLDHAHTHDGPSAVSADAHRP) is disordered. 35–42 (GPVGSGKT) contacts GTP.

The protein belongs to the SIMIBI class G3E GTPase family. UreG subfamily. In terms of assembly, homodimer. UreD, UreF and UreG form a complex that acts as a GTP-hydrolysis-dependent molecular chaperone, activating the urease apoprotein by helping to assemble the nickel containing metallocenter of UreC. The UreE protein probably delivers the nickel.

The protein localises to the cytoplasm. In terms of biological role, facilitates the functional incorporation of the urease nickel metallocenter. This process requires GTP hydrolysis, probably effectuated by UreG. This Streptomyces avermitilis (strain ATCC 31267 / DSM 46492 / JCM 5070 / NBRC 14893 / NCIMB 12804 / NRRL 8165 / MA-4680) protein is Urease accessory protein UreG.